The following is a 122-amino-acid chain: Small ribosomal subunit protein uS12 (122 aa).

The residue at position 89 (Asp-89) is a 3-methylthioaspartic acid.

Belongs to the universal ribosomal protein uS12 family. In terms of assembly, part of the 30S ribosomal subunit. Contacts proteins S8 and S17. May interact with IF1 in the 30S initiation complex.

With S4 and S5 plays an important role in translational accuracy. Functionally, interacts with and stabilizes bases of the 16S rRNA that are involved in tRNA selection in the A site and with the mRNA backbone. Located at the interface of the 30S and 50S subunits, it traverses the body of the 30S subunit contacting proteins on the other side and probably holding the rRNA structure together. The combined cluster of proteins S8, S12 and S17 appears to hold together the shoulder and platform of the 30S subunit. The chain is Small ribosomal subunit protein uS12 from Neorickettsia sennetsu (strain ATCC VR-367 / Miyayama) (Ehrlichia sennetsu).